Reading from the N-terminus, the 506-residue chain is DNA nucleotidylexotransferase (506 aa).

A Nuclear localization signal motif is present at residues 11–17 (SQRKRQK). The 98-residue stretch at 27 to 124 (GYEIKFNKLV…RPVDLEKKYH (98 aa)) folds into the BRCT domain. An involved in DNA binding region spans residues 258–262 (VGVKT). Residues 333–338 (GFRRGK) and 342–345 (HDID) contribute to the a 2'-deoxyribonucleoside 5'-triphosphate site. Mg(2+) contacts are provided by Asp343, Asp345, and Asp430. 445 to 446 (GW) provides a ligand contact to a 2'-deoxyribonucleoside 5'-triphosphate.

The protein belongs to the DNA polymerase type-X family. It depends on Mg(2+) as a cofactor.

Its subcellular location is the nucleus. The enzyme catalyses DNA(n) + a 2'-deoxyribonucleoside 5'-triphosphate = DNA(n+1) + diphosphate. In terms of biological role, template-independent DNA polymerase which catalyzes the random addition of deoxynucleoside 5'-triphosphate to the 3'-end of a DNA initiator. One of the in vivo functions of this enzyme is the addition of nucleotides at the junction (N region) of rearranged Ig heavy chain and T-cell receptor gene segments during the maturation of B- and T-cells. This chain is DNA nucleotidylexotransferase (DNTT), found in Gallus gallus (Chicken).